Reading from the N-terminus, the 160-residue chain is SsrA-binding protein (160 aa).

The protein belongs to the SmpB family.

It is found in the cytoplasm. In terms of biological role, required for rescue of stalled ribosomes mediated by trans-translation. Binds to transfer-messenger RNA (tmRNA), required for stable association of tmRNA with ribosomes. tmRNA and SmpB together mimic tRNA shape, replacing the anticodon stem-loop with SmpB. tmRNA is encoded by the ssrA gene; the 2 termini fold to resemble tRNA(Ala) and it encodes a 'tag peptide', a short internal open reading frame. During trans-translation Ala-aminoacylated tmRNA acts like a tRNA, entering the A-site of stalled ribosomes, displacing the stalled mRNA. The ribosome then switches to translate the ORF on the tmRNA; the nascent peptide is terminated with the 'tag peptide' encoded by the tmRNA and targeted for degradation. The ribosome is freed to recommence translation, which seems to be the essential function of trans-translation. This Photorhabdus laumondii subsp. laumondii (strain DSM 15139 / CIP 105565 / TT01) (Photorhabdus luminescens subsp. laumondii) protein is SsrA-binding protein.